Consider the following 41-residue polypeptide: Giant hemoglobin AI chain (41 aa).

In terms of domain architecture, Globin spans 2 to 41 (DCGMLQRIKVKQQWASVYSSGIAREDFGEAIWKAVFALAP).

The protein belongs to the globin family. As to quaternary structure, giant hemoglobin is composed of four heme-containing chains (AI to AIV), and two linker chains (AV and AVI).

The polypeptide is Giant hemoglobin AI chain (Lamellibrachia sp. (Deep-sea giant tube worm)).